Consider the following 223-residue polypeptide: MNTPMFTRTSSLERTLETNKVLKNTYFLLSMTLVTSAIAAMATMAIGISPIVALVMQLAAIGILFFVMPKAINSSSGLVWTFVFTGLMGGALGPMLNFYAAMPNGPIVIAQALGLTGMVFLGLSAYTITSKKDFSFMRNFLFAGLIIVIVAALINIFVGSTVAHLAISSVSALVFSGFILFDTSRIVRGEETNYISATISMYLNILNLFTSLLSILGIMNNND.

Transmembrane regions (helical) follow at residues 25 to 45, 46 to 66, 78 to 98, 105 to 125, 140 to 160, 161 to 181, and 199 to 219; these read TYFL…ATMA, IGIS…ILFF, LVWT…MLNF, GPIV…GLSA, FLFA…FVGS, TVAH…FILF, and ISMY…LGIM.

The protein belongs to the BI1 family.

It is found in the cell membrane. This is an uncharacterized protein from Vibrio cholerae serotype O1 (strain ATCC 39315 / El Tor Inaba N16961).